A 345-amino-acid polypeptide reads, in one-letter code: KRR1 small subunit processome component homolog (345 aa).

The 69-residue stretch at 125–193 (DIIKIGNLVH…VRDIVLETMN (69 aa)) folds into the KH domain. Positions 232–245 (NISKRKQPKVKKQK) are enriched in basic residues. Disordered regions lie at residues 232–260 (NISK…ESKV) and 273–329 (QEQK…VDVK). The stretch at 270-298 (FLNQEQKQAKRNQERTEKQKEAAKRQDER) forms a coiled coil. Composition is skewed to basic and acidic residues over residues 276 to 302 (KQAK…RNKD) and 315 to 329 (LKKE…VDVK).

It belongs to the KRR1 family. Monomer. Component of the ribosomal small subunit (SSU) processome.

Its subcellular location is the nucleus. The protein localises to the nucleolus. Its function is as follows. Required for 40S ribosome biogenesis. Involved in nucleolar processing of pre-18S ribosomal RNA and ribosome assembly. Binds to RNA. Required for female germline development, cell viability during eye development and for survival of dividing cells and epithelial cells during early wing disk development. This chain is KRR1 small subunit processome component homolog, found in Drosophila erecta (Fruit fly).